A 341-amino-acid polypeptide reads, in one-letter code: Ferrochelatase (341 aa).

The Fe cation site is built by H210 and E291.

Belongs to the ferrochelatase family.

It is found in the cytoplasm. The enzyme catalyses heme b + 2 H(+) = protoporphyrin IX + Fe(2+). Its pathway is porphyrin-containing compound metabolism; protoheme biosynthesis; protoheme from protoporphyrin-IX: step 1/1. Functionally, catalyzes the ferrous insertion into protoporphyrin IX. In Alcanivorax borkumensis (strain ATCC 700651 / DSM 11573 / NCIMB 13689 / SK2), this protein is Ferrochelatase.